The sequence spans 289 residues: MNMPLHQISAIPSQDATSARVYRSKTKEKEREEQNEKTLGHSMSHSSNISKAGGSSVASAPVSSFPRTSVTPSNQDICRICHCEGDDESPLITPCRCTGSLHFVHQTCLQQWIKSSDTRCCELCKYEFIMETKLKPLRKWEKLQMTSSERRKIMCSVTFHVIAITCVVWSLYVLIDRTAEEIRQGQATGILEWPFWTKLVVVAIGFTGGLLFMYVQCKVYVQLWRRLKAYNRVIYVQNCPETSKRNIFEKPALPEPNFESKDGRGVCHSDTNSSCCTEPEDTGAEIIHV.

The disordered stretch occupies residues 1 to 68 (MNMPLHQISA…SAPVSSFPRT (68 aa)). Basic and acidic residues predominate over residues 25–39 (KTKEKEREEQNEKTL). Low complexity predominate over residues 50-64 (SKAGGSSVASAPVSS). The RING-CH-type zinc finger occupies 70–131 (VTPSNQDICR…ELCKYEFIME (62 aa)). 8 residues coordinate Zn(2+): C78, C81, C95, C97, H105, C108, C121, and C124. 2 consecutive transmembrane segments (helical) span residues 155–175 (CSVT…YVLI) and 195–215 (FWTK…FMYV).

In terms of assembly, interacts with CD86.

It localises to the golgi apparatus membrane. Its subcellular location is the endoplasmic reticulum membrane. It is found in the cytoplasmic vesicle membrane. The protein localises to the lysosome membrane. The protein resides in the early endosome membrane. It catalyses the reaction S-ubiquitinyl-[E2 ubiquitin-conjugating enzyme]-L-cysteine + [acceptor protein]-L-lysine = [E2 ubiquitin-conjugating enzyme]-L-cysteine + N(6)-ubiquitinyl-[acceptor protein]-L-lysine.. It participates in protein modification; protein ubiquitination. Functionally, E3 ubiquitin-protein ligase that plays several important roles in innate immunity and adaptive immunity. Mediates ubiquitination of CD86 and MHC class II proteins, such as HLA-DR alpha and beta, and promotes their subsequent endocytosis and sorting to lysosomes via multivesicular bodies. Possesses a very broad antiviral activity by specifically inactivating different viral fusion proteins. Targets and ubiquitinates cytoplasmic lysine residues of viral envelope glycoproteins with single transmembrane domains leading to their lysosomal degradation. Mediates the regulation of constitutive ubiquitination and trafficking of the viral restriction factor BST2 within the endocytic pathway. Plays a role in maintenance of immune tolerance to self by promoting the turnover and proteasomal degradation of PD-L1/CD274 via ubiquitination. Catalyzes the 'Lys-63'-linked polyubiquitylation of cGAS thereby inhibiting its DNA binding ability and impairing its antiviral innate immunity. Negatively regulates IL7-mediated T-cell homeostasis by mediating 'Lys-27'-linked polyubiquitination of IL7R, leading to its lysosomal degradation. The polypeptide is E3 ubiquitin-protein ligase MARCHF8 (MARCHF8) (Bos taurus (Bovine)).